A 183-amino-acid polypeptide reads, in one-letter code: Ribosome-recycling factor (183 aa).

The protein belongs to the RRF family.

It localises to the cytoplasm. Functionally, responsible for the release of ribosomes from messenger RNA at the termination of protein biosynthesis. May increase the efficiency of translation by recycling ribosomes from one round of translation to another. This chain is Ribosome-recycling factor, found in Acetivibrio thermocellus (strain ATCC 27405 / DSM 1237 / JCM 9322 / NBRC 103400 / NCIMB 10682 / NRRL B-4536 / VPI 7372) (Clostridium thermocellum).